Reading from the N-terminus, the 4655-residue chain is Low-density lipoprotein receptor-related protein 2 (4655 aa).

The N-terminal stretch at 1–25 (MDRGPAAVACTLLLALVACLAPASG) is a signal peptide. At 26–4423 (QECDSAHFRC…FSKGISPGTT (4398 aa)) the chain is on the extracellular side. LDL-receptor class A domains follow at residues 27–63 (ECDS…IGCA), 66–104 (TCQQ…QDCS), 107–143 (TCSS…NDCQ), 146–180 (TCEQ…INCT), 182–218 (ICLH…HACN), 221–257 (TCGG…DGCE), and 265–308 (KCSP…KYCS). 21 disulfides stabilise this stretch: Cys-28-Cys-40, Cys-35-Cys-53, Cys-47-Cys-62, Cys-67-Cys-80, Cys-74-Cys-93, Cys-87-Cys-103, Cys-108-Cys-120, Cys-115-Cys-133, Cys-127-Cys-142, Cys-147-Cys-157, Cys-152-Cys-170, Cys-164-Cys-179, Cys-183-Cys-195, Cys-190-Cys-208, Cys-202-Cys-217, Cys-222-Cys-234, Cys-229-Cys-247, Cys-241-Cys-256, Cys-266-Cys-279, Cys-273-Cys-292, and Cys-286-Cys-307. Residues Asn-159 and Asn-178 are each glycosylated (N-linked (GlcNAc...) asparagine). N-linked (GlcNAc...) asparagine glycosylation is found at Asn-299, Asn-300, Asn-341, Asn-388, and Asn-463. LDL-receptor class B repeat units follow at residues 436–478 (QRVF…DWVN), 479–521 (NKIY…DPTV), 522–568 (GYLF…DMIS), 569–613 (KRVY…FEGQ), 753–795 (STIF…DWIS), 796–837 (KNLY…HPFA), 838–881 (GYLF…DWAA), and 882–925 (SRLY…FGEH). Asn-866 carries N-linked (GlcNAc...) asparagine glycosylation. The LDL-receptor class A 8 domain maps to 1025–1061 (QCGLFSFPCKNGRCVPNYYLCDGVDDCHDNSDEQLCG). 3 disulfide bridges follow: Cys-1026–Cys-1038, Cys-1033–Cys-1051, and Cys-1045–Cys-1060. Asn-1064 carries N-linked (GlcNAc...) asparagine glycosylation. 7 consecutive LDL-receptor class A domains span residues 1066–1102 (TCSS…HNCP), 1108–1144 (SCLD…KNCN), 1148–1184 (TCQP…VGCV), 1186–1223 (NCTA…AGCP), 1229–1267 (MCHS…NACV), 1270–1306 (TCPS…KDCP), and 1304–1349 (DCPT…PLCN). 6 cysteine pairs are disulfide-bonded: Cys-1067–Cys-1079, Cys-1074–Cys-1092, Cys-1086–Cys-1101, Cys-1109–Cys-1121, Cys-1116–Cys-1134, and Cys-1128–Cys-1143. Trp-1126, Asp-1129, Asp-1131, Asp-1133, Asp-1139, and Glu-1140 together coordinate Ca(2+). An N-linked (GlcNAc...) asparagine glycan is attached at Asn-1144. 3 cysteine pairs are disulfide-bonded: Cys-1149-Cys-1161, Cys-1156-Cys-1174, and Cys-1168-Cys-1183. A glycan (N-linked (GlcNAc...) asparagine) is linked at Asn-1186. Disulfide bonds link Cys-1187–Cys-1200, Cys-1194–Cys-1213, Cys-1207–Cys-1222, Cys-1230–Cys-1243, Cys-1237–Cys-1256, Cys-1250–Cys-1266, Cys-1271–Cys-1283, Cys-1278–Cys-1296, Cys-1290–Cys-1305, Cys-1305–Cys-1325, Cys-1312–Cys-1338, and Cys-1332–Cys-1348. Positions 1208, 1210, 1212, 1218, and 1219 each coordinate Ca(2+). N-linked (GlcNAc...) asparagine glycans are attached at residues Asn-1327, Asn-1340, and Asn-1383. The region spanning 1390–1429 (DIDECDILGSCSQHCYNMRGSFRCSCDTGYMLESDGRTCK) is the EGF-like 1; calcium-binding domain. Intrachain disulfides connect Cys-1394–Cys-1404, Cys-1400–Cys-1413, and Cys-1415–Cys-1428. N-linked (GlcNAc...) asparagine glycosylation is found at Asn-1464, Asn-1496, and Asn-1550. LDL-receptor class B repeat units lie at residues 1478–1520 (GRIF…DWVG), 1521–1563 (RNLY…DPRM), 1566–1609 (HLLF…DYPN), 1610–1654 (RLLY…FEDS), and 1655–1695 (VYWT…VHPS). N-linked (GlcNAc...) asparagine glycosylation occurs at Asn-1675. An EGF-like 2 domain is found at 1700–1741 (SVNPCAFSRCSHLCLLSSQGPHFYSCVCPSGWSLSPDLLNCL). 3 cysteine pairs are disulfide-bonded: Cys-1704-Cys-1713, Cys-1709-Cys-1725, and Cys-1727-Cys-1740. 5 LDL-receptor class B repeats span residues 1790-1832 (QYIY…DWIS), 1833-1882 (RNLY…DPAR), 1883-1930 (GKLY…DIEE), 1931-1972 (QKLY…HDSF), and 1973-2013 (LYYT…YHRR). Asn-1810 carries an N-linked (GlcNAc...) asparagine glycan. Asn-2055 is a glycosylation site (N-linked (GlcNAc...) asparagine). 9 LDL-receptor class B repeats span residues 2107-2156 (GFIY…DWVA), 2157-2201 (GNLY…DPKN), 2202-2245 (RYLF…DRSD), 2246-2289 (GYVY…FENS), 2431-2477 (DRIY…DWIT), 2478-2518 (RRIY…DPCQ), 2519-2562 (GYLY…DYEE), 2563-2604 (DLLY…YGQY), and 2605-2646 (IYWT…VVKN). Residues Asn-2177 and Asn-2224 are each glycosylated (N-linked (GlcNAc...) asparagine). Asn-2499 and Asn-2547 each carry an N-linked (GlcNAc...) asparagine glycan. 10 consecutive LDL-receptor class A domains span residues 2699 to 2737 (RCGA…SVCA), 2740 to 2776 (TCSP…AGCL), 2779 to 2818 (DCNA…KNCP), 2821 to 2860 (TCQS…TYCT), 2863 to 2900 (TCSS…ASCG), 2905 to 2944 (TCLA…HQCQ), 2947 to 2989 (NCSD…QNCT), 2992 to 3028 (TCSE…RGCL), 3031 to 3069 (TCQQ…HLCH), and 3074 to 3110 (TCPP…KGCG). 18 disulfides stabilise this stretch: Cys-2700–Cys-2712, Cys-2707–Cys-2725, Cys-2719–Cys-2736, Cys-2741–Cys-2753, Cys-2748–Cys-2766, Cys-2760–Cys-2775, Cys-2780–Cys-2793, Cys-2788–Cys-2806, Cys-2800–Cys-2817, Cys-2822–Cys-2835, Cys-2829–Cys-2848, Cys-2842–Cys-2859, Cys-2864–Cys-2876, Cys-2871–Cys-2889, Cys-2883–Cys-2899, Cys-2906–Cys-2918, Cys-2913–Cys-2931, and Cys-2925–Cys-2943. Residue Asn-2781 is glycosylated (N-linked (GlcNAc...) asparagine). Asn-2809 and Asn-2810 each carry an N-linked (GlcNAc...) asparagine glycan. Asn-2947 carries an N-linked (GlcNAc...) asparagine glycan. Intrachain disulfides connect Cys-2948/Cys-2965, Cys-2955/Cys-2978, Cys-2972/Cys-2988, Cys-2993/Cys-3005, Cys-3000/Cys-3018, Cys-3012/Cys-3027, Cys-3032/Cys-3044, Cys-3039/Cys-3057, Cys-3051/Cys-3068, Cys-3075/Cys-3087, Cys-3082/Cys-3100, Cys-3094/Cys-3109, Cys-3114/Cys-3126, Cys-3122/Cys-3135, Cys-3137/Cys-3150, Cys-3156/Cys-3167, Cys-3163/Cys-3176, and Cys-3178/Cys-3191. Asn-2987 carries an N-linked (GlcNAc...) asparagine glycan. The EGF-like 3 domain maps to 3110–3151 (GINECHDPSISGCDHNCTDTLTSFYCSCRPGYKLMSDKRTCV). An N-linked (GlcNAc...) asparagine glycan is attached at Asn-3125. Positions 3152-3192 (DIDECTEMPFVCSQKCENVIGSYICKCAPGYLREPDGKTCR) constitute an EGF-like 4; calcium-binding domain. 4 N-linked (GlcNAc...) asparagine glycosylation sites follow: Asn-3211, Asn-3257, Asn-3315, and Asn-3355. LDL-receptor class B repeat units lie at residues 3239 to 3281 (KRLY…DWVS), 3282 to 3324 (RKLY…DNPR), 3333 to 3376 (GYLY…DYTN), 3377 to 3419 (DLLY…FEDT), and 3420 to 3460 (IYWT…YHPY). N-linked (GlcNAc...) asparagine glycosylation occurs at Asn-3446. LDL-receptor class A domains lie at 3511–3549 (MCSS…ALCP), 3552–3590 (FCRL…LLCE), 3593–3631 (HCDS…SHCA), 3634–3672 (TCRP…EECM), 3677–3715 (LCDN…QGCE), 3718–3755 (TCHP…ENCA), 3758–3794 (ECTE…RDCE), 3797–3833 (TCHP…ADCP), 3841–3879 (YCQA…HLCL), 3882–3921 (PCNS…EHCR), and 3927–3963 (PCTE…LGCN). 33 disulfide bridges follow: Cys-3512-Cys-3525, Cys-3519-Cys-3538, Cys-3532-Cys-3548, Cys-3553-Cys-3565, Cys-3560-Cys-3578, Cys-3572-Cys-3589, Cys-3594-Cys-3606, Cys-3601-Cys-3619, Cys-3613-Cys-3630, Cys-3635-Cys-3647, Cys-3642-Cys-3660, Cys-3654-Cys-3671, Cys-3678-Cys-3692, Cys-3686-Cys-3705, Cys-3699-Cys-3714, Cys-3719-Cys-3732, Cys-3727-Cys-3745, Cys-3739-Cys-3754, Cys-3759-Cys-3771, Cys-3766-Cys-3784, Cys-3778-Cys-3793, Cys-3798-Cys-3810, Cys-3805-Cys-3823, Cys-3817-Cys-3832, Cys-3842-Cys-3854, Cys-3849-Cys-3867, Cys-3861-Cys-3878, Cys-3883-Cys-3896, Cys-3891-Cys-3909, Cys-3903-Cys-3920, Cys-3928-Cys-3940, Cys-3935-Cys-3953, and Cys-3947-Cys-3962. Asn-3564 carries N-linked (GlcNAc...) asparagine glycosylation. An N-linked (GlcNAc...) asparagine glycan is attached at Asn-3680. Asn-3978 carries an N-linked (GlcNAc...) asparagine glycan. The EGF-like 5; calcium-binding domain maps to 4007–4048 (DINECEQFGTCPQHCRNTKGSYECVCADGFTSMSDRPGKRCA). 3 cysteine pairs are disulfide-bonded: Cys-4011–Cys-4021, Cys-4017–Cys-4030, and Cys-4032–Cys-4047. A glycan (N-linked (GlcNAc...) asparagine) is linked at Asn-4068. LDL-receptor class B repeat units lie at residues 4154-4196 (RHIY…NPKL), 4197-4240 (GLMF…DYLN), and 4242-4283 (DRIY…FEDQ). Asn-4327 is a glycosylation site (N-linked (GlcNAc...) asparagine). The 35-residue stretch at 4377–4411 (LPPPCRCMHGGNCYFDETDLPKCKCPSGYTGKYCE) folds into the EGF-like 6 domain. Intrachain disulfides connect Cys-4381-Cys-4389, Cys-4383-Cys-4399, and Cys-4401-Cys-4410. The helical transmembrane segment at 4424 to 4446 (AVAVLLTILLIVVIGALAIAGFF) threads the bilayer. The Cytoplasmic portion of the chain corresponds to 4447-4655 (HYRRTGSLLP…ANLVKEDSEV (209 aa)). The SH3-binding motif lies at 4453–4462 (SLLPALPKLP). The PxLPxI/L motif 1; mediates interaction with ANKRA2 motif lies at 4456-4461 (PALPKL). Residues 4459 to 4464 (PKLPSL) carry the PxLPxI/L motif 2; mediates interaction with ANKRA2 motif. Phosphoserine occurs at positions 4463 and 4466. The Endocytosis signal signature appears at 4521-4526 (FENPMY). The segment at 4550–4574 (KNYGSPINPSEIVPETNPTSPAADG) is disordered. Positions 4565 to 4574 (TNPTSPAADG) are enriched in polar residues. Ser-4569 carries the post-translational modification Phosphoserine. Residues 4589 to 4602 (QTTNFENPIYAQME) form an interaction with DAB2 region. An NPXY motif motif is present at residues 4595 to 4598 (NPIY). The SH2-binding motif lies at 4598–4601 (YAQM). The disordered stretch occupies residues 4601 to 4655 (MENEQKESVAATPPPSPSLPAKPKPPSRRDPTPTYSATEDTFKDTANLVKEDSEV). Residues 4611-4622 (ATPPPSPSLPAK) carry the SH3-binding motif. Over residues 4612 to 4624 (TPPPSPSLPAKPK) the composition is skewed to pro residues. Position 4616 is a phosphoserine (Ser-4616). Thr-4632 is modified (phosphothreonine). A Phosphoserine modification is found at Ser-4653.

This sequence belongs to the LDLR family. In terms of assembly, binds plasminogen, extracellular matrix components, plasminogen activator-plasminogen activator inhibitor type I complex, apolipoprotein E-enriched beta-VLDL, lipoprotein lipase, lactoferrin, CLU/clusterin and calcium. Forms a multimeric complex together with LRPAP1. Interacts (via PxLPxI/L motif) with ANKRA2 (via ankyrin repeats). Interacts with LRP2BP. Interacts (via NPXY motif) with DAB2; the interaction is not affected by tyrosine phosphorylation of the NPXY motif. Interacts with MB. Interacts with BMP4. Interacts with the Sonic hedgehog protein N-product which is the active product of SHH. Interacts with CST3 in a calcium-dependent manner. Interacts with the vitamin-D binding protein GC/DBP. Interacts with sex hormone-binding protein SHBG. Interacts with angiotensin-2. Also interacts with angiotensin 1-7. Interacts with APOM. Interacts with selenoprotein SEPP1. Interacts with LEP. Interacts with ALB. Interacts with the antiapoptotic protein BIRC5/survivin. Interacts with matrix metalloproteinase MMP2 in complex with metalloproteinase inhibitor TIMP1. In neurons, forms a trimeric complex with APP and APPB1/FE65. Interacts with LDLRAP1/ARH; mediates trafficking of LRP2 to the endocytic recycling compartment. Does not interact with beta-amyloid protein 40 alone but interacts with the complex composed of beta-amyloid protein 40 and CLU/APOJ. Interacts with MDK. A fraction undergoes proteolytic cleavage of the extracellular domain at the cell membrane to generate a cytoplasmic tail fragment. This is internalized into the early endosome from where it trafficks in an LDLRAP1/ARH-dependent manner to the endocytic recycling compartment (ERC). In the ERC, it is further cleaved by gamma-secretase to release a fragment which translocates to the nucleus and mediates transcriptional repression. Post-translationally, N-glycosylation is required for ligand binding. Expressed in first and third trimester cytotrophoblasts in the placenta (at protein level). Absorptive epithelia, including renal proximal tubules.

It is found in the apical cell membrane. Its subcellular location is the endosome lumen. The protein resides in the membrane. It localises to the coated pit. The protein localises to the cell projection. It is found in the dendrite. Its subcellular location is the axon. Its function is as follows. Multiligand endocytic receptor. Acts together with CUBN to mediate endocytosis of high-density lipoproteins. Mediates receptor-mediated uptake of polybasic drugs such as aprotinin, aminoglycosides and polymyxin B. In the kidney, mediates the tubular uptake and clearance of leptin. Also mediates transport of leptin across the blood-brain barrier through endocytosis at the choroid plexus epithelium. Endocytosis of leptin in neuronal cells is required for hypothalamic leptin signaling and leptin-mediated regulation of feeding and body weight. Mediates endocytosis and subsequent lysosomal degradation of CST3 in kidney proximal tubule cells. Mediates renal uptake of 25-hydroxyvitamin D3 in complex with the vitamin D3 transporter GC/DBP. Mediates renal uptake of metallothionein-bound heavy metals. Together with CUBN, mediates renal reabsorption of myoglobin. Mediates renal uptake and subsequent lysosomal degradation of APOM. Plays a role in kidney selenium homeostasis by mediating renal endocytosis of selenoprotein SEPP1. Mediates renal uptake of the antiapoptotic protein BIRC5/survivin which may be important for functional integrity of the kidney. Mediates renal uptake of matrix metalloproteinase MMP2 in complex with metalloproteinase inhibitor TIMP1. Mediates endocytosis of Sonic hedgehog protein N-product (ShhN), the active product of SHH. Also mediates ShhN transcytosis. In the embryonic neuroepithelium, mediates endocytic uptake and degradation of BMP4, is required for correct SHH localization in the ventral neural tube and plays a role in patterning of the ventral telencephalon. Required at the onset of neurulation to sequester SHH on the apical surface of neuroepithelial cells of the rostral diencephalon ventral midline and to control PTCH1-dependent uptake and intracellular trafficking of SHH. During neurulation, required in neuroepithelial cells for uptake of folate bound to the folate receptor FOLR1 which is necessary for neural tube closure. In the adult brain, negatively regulates BMP signaling in the subependymal zone which enables neurogenesis to proceed. In astrocytes, mediates endocytosis of ALB which is required for the synthesis of the neurotrophic factor oleic acid. Involved in neurite branching. During optic nerve development, required for SHH-mediated migration and proliferation of oligodendrocyte precursor cells. Mediates endocytic uptake and clearance of SHH in the retinal margin which protects retinal progenitor cells from mitogenic stimuli and keeps them quiescent. Plays a role in reproductive organ development by mediating uptake in reproductive tissues of androgen and estrogen bound to the sex hormone binding protein SHBG. Mediates endocytosis of angiotensin-2. Also mediates endocytosis of angiotensis 1-7. Binds to the complex composed of beta-amyloid protein 40 and CLU/APOJ and mediates its endocytosis and lysosomal degradation. Required for embryonic heart development. Required for normal hearing, possibly through interaction with estrogen in the inner ear. This chain is Low-density lipoprotein receptor-related protein 2, found in Homo sapiens (Human).